A 96-amino-acid polypeptide reads, in one-letter code: Keratin-associated protein 12-1 (96 aa).

Repeat copies occupy residues 10-14, 15-19, 24-28, 30-34, 35-39, 45-49, 50-54, 55-59, 60-64, 70-74, 75-79, 80-84, 85-89, and 90-94. Positions 10–94 are 14 X 5 AA approximate repeats; the sequence is CQPACCAPSP…CRPISCSTPS (85 aa).

The protein belongs to the KRTAP type 12 family. Interacts with hair keratins. As to expression, restricted to a narrow region of the hair fiber cuticle, lying approximately 20 cell layers above the apex of the dermal papilla of the hair root; not detected in any other tissues.

In the hair cortex, hair keratin intermediate filaments are embedded in an interfilamentous matrix, consisting of hair keratin-associated proteins (KRTAP), which are essential for the formation of a rigid and resistant hair shaft through their extensive disulfide bond cross-linking with abundant cysteine residues of hair keratins. The matrix proteins include the high-sulfur and high-glycine-tyrosine keratins. The polypeptide is Keratin-associated protein 12-1 (KRTAP12-1) (Homo sapiens (Human)).